Reading from the N-terminus, the 101-residue chain is CLAVATA3/ESR (CLE)-related protein 18 (101 aa).

Positions 1 to 25 (MHLLKGGVVLIITLILFLITSSIVA) are cleaved as a signal peptide. The interval 37–58 (RQIPTGPDPLHNPPQPSPKHHH) is disordered. Hydroxyproline is present on residues P40 and P43. A compositionally biased stretch (pro residues) spans 42–53 (GPDPLHNPPQPS). P43 carries an O-linked (Ara...) hydroxyproline glycan. Position 76 is a sulfotyrosine (Y76). P84 bears the Hydroxyproline mark.

It belongs to the CLV3/ESR signal peptide family. In terms of processing, the tyrosine sulfation is critical for the function of the peptide. The O-glycosylation (arabinosylation) of the hydroxyproline Pro-43 enhances binding affinity of the CLE18p peptide for its receptor. Expressed in roots, leaves, siliques and seedlings.

The protein resides in the secreted. The protein localises to the extracellular space. Functionally, root growth factor that regulates the pattern of root growth and lateral root development by modulating the length and the number of cortical cells in the root apical meristem (RAM), and the anticlinal asymmetric cell divisions in lateral root initiation cells. Extracellular signal peptide that regulates cell fate. Represses root apical meristem maintenance. Root growth factor that regulates the pattern of root growth and lateral root development. Regulates the transition of protophloem cells from proliferation to differentiation, thus impinging on postembryonic growth capacity of the root meristem; this signaling pathway requires CRN and CLV2. This Arabidopsis thaliana (Mouse-ear cress) protein is CLAVATA3/ESR (CLE)-related protein 18.